A 139-amino-acid chain; its full sequence is Prefoldin subunit alpha (139 aa).

The protein belongs to the prefoldin subunit alpha family. As to quaternary structure, heterohexamer of two alpha and four beta subunits.

Its subcellular location is the cytoplasm. Its function is as follows. Molecular chaperone capable of stabilizing a range of proteins. Seems to fulfill an ATP-independent, HSP70-like function in archaeal de novo protein folding. The chain is Prefoldin subunit alpha from Picrophilus torridus (strain ATCC 700027 / DSM 9790 / JCM 10055 / NBRC 100828 / KAW 2/3).